We begin with the raw amino-acid sequence, 197 residues long: MSITIKLLVGLANPGPEYAQTRHNAGQWYVSQLASQENIQLKAEPKFYGLTGRIQFAGNDLRLLVPTTFMNLSGKAVAAMANFYRIKPEEILIAHDELDLLPGIAKFKLGGGHGGHNGLKDIIQKLGNDKNFYRLRIGIGHPGDKNRVSGYVLGKAPSSEQNLIDQSIDEAARCTHILGQDGLEKAMNRLHSFKAEK.

Tyrosine 18 contacts tRNA. The Proton acceptor role is filled by histidine 23. TRNA is bound by residues phenylalanine 69, asparagine 71, and asparagine 117.

It belongs to the PTH family. As to quaternary structure, monomer.

It is found in the cytoplasm. It carries out the reaction an N-acyl-L-alpha-aminoacyl-tRNA + H2O = an N-acyl-L-amino acid + a tRNA + H(+). Hydrolyzes ribosome-free peptidyl-tRNAs (with 1 or more amino acids incorporated), which drop off the ribosome during protein synthesis, or as a result of ribosome stalling. In terms of biological role, catalyzes the release of premature peptidyl moieties from peptidyl-tRNA molecules trapped in stalled 50S ribosomal subunits, and thus maintains levels of free tRNAs and 50S ribosomes. This is Peptidyl-tRNA hydrolase from Psychromonas ingrahamii (strain DSM 17664 / CCUG 51855 / 37).